Reading from the N-terminus, the 460-residue chain is Ribosomal protein uS12 methylthiotransferase RimO (460 aa).

Residues 16–130 (NKIHFISLGC…ILSAIESKEA (115 aa)) form the MTTase N-terminal domain. The [4Fe-4S] cluster site is built by C25, C61, C93, C164, C168, and C171. The Radical SAM core domain occupies 150 to 382 (STPKHYAYLK…SQTQKKNVEK (233 aa)). Positions 385-455 (KQLVGQIVEA…GYDLVGRVIK (71 aa)) constitute a TRAM domain.

It belongs to the methylthiotransferase family. RimO subfamily. Requires [4Fe-4S] cluster as cofactor.

It localises to the cytoplasm. It carries out the reaction L-aspartate(89)-[ribosomal protein uS12]-hydrogen + (sulfur carrier)-SH + AH2 + 2 S-adenosyl-L-methionine = 3-methylsulfanyl-L-aspartate(89)-[ribosomal protein uS12]-hydrogen + (sulfur carrier)-H + 5'-deoxyadenosine + L-methionine + A + S-adenosyl-L-homocysteine + 2 H(+). In terms of biological role, catalyzes the methylthiolation of an aspartic acid residue of ribosomal protein uS12. The polypeptide is Ribosomal protein uS12 methylthiotransferase RimO (Chlamydia caviae (strain ATCC VR-813 / DSM 19441 / 03DC25 / GPIC) (Chlamydophila caviae)).